The sequence spans 267 residues: NAD kinase (267 aa).

Asp-52 (proton acceptor) is an active-site residue. Residues 52 to 53 (DG), Arg-57, 121 to 122 (NE), Arg-132, Lys-150, Asp-152, 163 to 168 (TAYSLS), and Ala-187 each bind NAD(+).

It belongs to the NAD kinase family. A divalent metal cation serves as cofactor.

The protein resides in the cytoplasm. The enzyme catalyses NAD(+) + ATP = ADP + NADP(+) + H(+). Functionally, involved in the regulation of the intracellular balance of NAD and NADP, and is a key enzyme in the biosynthesis of NADP. Catalyzes specifically the phosphorylation on 2'-hydroxyl of the adenosine moiety of NAD to yield NADP. This chain is NAD kinase, found in Fusobacterium nucleatum subsp. nucleatum (strain ATCC 25586 / DSM 15643 / BCRC 10681 / CIP 101130 / JCM 8532 / KCTC 2640 / LMG 13131 / VPI 4355).